The following is a 177-amino-acid chain: Probable inosine/xanthosine triphosphatase (177 aa).

The protein belongs to the YjjX NTPase family. In terms of assembly, homodimer. The cofactor is Mg(2+). Mn(2+) serves as cofactor.

It carries out the reaction XTP + H2O = XDP + phosphate + H(+). It catalyses the reaction ITP + H2O = IDP + phosphate + H(+). In terms of biological role, phosphatase that hydrolyzes non-canonical purine nucleotides such as XTP and ITP to their respective diphosphate derivatives. Probably excludes non-canonical purines from DNA/RNA precursor pool, thus preventing their incorporation into DNA/RNA and avoiding chromosomal lesions. This is Probable inosine/xanthosine triphosphatase from Halalkalibacterium halodurans (strain ATCC BAA-125 / DSM 18197 / FERM 7344 / JCM 9153 / C-125) (Bacillus halodurans).